Reading from the N-terminus, the 522-residue chain is UPF0288 protein MTH_1865 (522 aa).

Belongs to the UPF0288 family.

The protein is UPF0288 protein MTH_1865 of Methanothermobacter thermautotrophicus (strain ATCC 29096 / DSM 1053 / JCM 10044 / NBRC 100330 / Delta H) (Methanobacterium thermoautotrophicum).